A 360-amino-acid polypeptide reads, in one-letter code: (+)-6a-hydroxymaackiain 3-O-methyltransferase 2 (360 aa).

Residues 202–205 (VAGG), D226, 226–227 (DQ), 246–247 (DM), and K260 contribute to the S-adenosyl-L-methionine site. H264 functions as the Proton acceptor in the catalytic mechanism.

Belongs to the class I-like SAM-binding methyltransferase superfamily. Cation-independent O-methyltransferase family. COMT subfamily.

The enzyme catalyses (+)-6a-hydroxymaackiain + S-adenosyl-L-methionine = (+)-pisatin + S-adenosyl-L-homocysteine + H(+). Its function is as follows. 3-O-methyltransferase involved in the phytoalexin pisatin biosynthesis. Can use (+)-6a-hydroxymaackiain, (+)-maackiain and with a lower activity (+)-medicarpin and 2,7,4'-trihydroxyisoflavanone as substrates, but not (-)-6a-hydroxymaackiain, daidzein, formononetin or isoliquiritigenin. The sequence is that of (+)-6a-hydroxymaackiain 3-O-methyltransferase 2 (HMM2) from Pisum sativum (Garden pea).